The chain runs to 89 residues: Neuropeptide F (89 aa).

The first 29 residues, 1 to 29, serve as a signal peptide directing secretion; sequence MASGTFTQRLLVALMIFALIADLSTLVAA. The residue at position 61 (Phe-61) is a Phenylalanine amide. Positions 65–89 are excised as a propeptide; that stretch reads GGYLNPAIFGQDEQEVDWQDSTFSR.

This sequence belongs to the NPY family.

Its subcellular location is the secreted. Its function is as follows. An integral part of the sensory system that mediates food signaling, providing the neural basis for the regulation of food response; coordinates larval foraging and social behavior changes during development. May have a hormonal role in females. This is Neuropeptide F from Anopheles gambiae (African malaria mosquito).